The following is a 733-amino-acid chain: Polyribonucleotide nucleotidyltransferase (733 aa).

Mg(2+) contacts are provided by D488 and D494. The 60-residue stretch at 555–614 (PRIEMMTIPVEKIREVIGSGGKVIREIVEQTGAKINIEDDGTIKIASPDTKSIETAKSWI) folds into the KH domain. The region spanning 624–692 (GTIYQGTVVK…ERGKIRLSMK (69 aa)) is the S1 motif domain. The interval 698–733 (TGKEIPQDDLIKTEKEQNPDEKNKSEKKRHNRKKED) is disordered. Basic and acidic residues predominate over residues 702 to 721 (IPQDDLIKTEKEQNPDEKNK). The segment covering 722-733 (SEKKRHNRKKED) has biased composition (basic residues).

The protein belongs to the polyribonucleotide nucleotidyltransferase family. It depends on Mg(2+) as a cofactor.

It is found in the cytoplasm. The catalysed reaction is RNA(n+1) + phosphate = RNA(n) + a ribonucleoside 5'-diphosphate. Its function is as follows. Involved in mRNA degradation. Catalyzes the phosphorolysis of single-stranded polyribonucleotides processively in the 3'- to 5'-direction. The sequence is that of Polyribonucleotide nucleotidyltransferase from Bartonella bacilliformis (strain ATCC 35685 / KC583 / Herrer 020/F12,63).